The following is a 670-amino-acid chain: UvrABC system protein B (670 aa).

Residues 26 to 183 (EGLEDGLAHQ…RRLAELQYSR (158 aa)) enclose the Helicase ATP-binding domain. 39-46 (GVTGSGKT) is an ATP binding site. The Beta-hairpin motif lies at 92–115 (YYDYYQPEAYVPSSDTFIEKDASV). The Helicase C-terminal domain maps to 431–597 (QVDDLLSEIR…GLNKKISDIL (167 aa)). One can recognise a UVR domain in the interval 630–665 (ELKIRELESKMLTHAQNLEFEEAAALRDELQALRAQ).

The protein belongs to the UvrB family. In terms of assembly, forms a heterotetramer with UvrA during the search for lesions. Interacts with UvrC in an incision complex.

It is found in the cytoplasm. Functionally, the UvrABC repair system catalyzes the recognition and processing of DNA lesions. A damage recognition complex composed of 2 UvrA and 2 UvrB subunits scans DNA for abnormalities. Upon binding of the UvrA(2)B(2) complex to a putative damaged site, the DNA wraps around one UvrB monomer. DNA wrap is dependent on ATP binding by UvrB and probably causes local melting of the DNA helix, facilitating insertion of UvrB beta-hairpin between the DNA strands. Then UvrB probes one DNA strand for the presence of a lesion. If a lesion is found the UvrA subunits dissociate and the UvrB-DNA preincision complex is formed. This complex is subsequently bound by UvrC and the second UvrB is released. If no lesion is found, the DNA wraps around the other UvrB subunit that will check the other stand for damage. The chain is UvrABC system protein B from Pectobacterium carotovorum subsp. carotovorum (strain PC1).